Reading from the N-terminus, the 263-residue chain is Flagellar brake protein YcgR (263 aa).

A disordered region spans residues 1 to 21 (MAELSTPSPASPAPLDGGRGD). In terms of domain architecture, PilZ spans 133-250 (QRREFYRLQV…DTRIQRYIFK (118 aa)).

Belongs to the YcgR family. As to quaternary structure, monomer. Interacts with the flagellar basal bodies.

The protein resides in the bacterial flagellum basal body. In terms of biological role, acts as a flagellar brake, regulating swimming and swarming in a bis-(3'-5') cyclic diguanylic acid (c-di-GMP)-dependent manner. Binds 1 c-di-GMP dimer per subunit. Increasing levels of c-di-GMP lead to decreased motility. The polypeptide is Flagellar brake protein YcgR (Thauera aminoaromatica).